The following is a 286-amino-acid chain: Enoyl-CoA hydratase ChsH3 (286 aa).

Residues Ala-163–Thr-271 form the MaoC-like domain. Active-site residues include Asp-189 and His-194.

This sequence belongs to the enoyl-CoA hydratase/isomerase family. Homodimer.

The catalysed reaction is (22E)-3-oxochola-4,22-dien-24-oyl-CoA + H2O = (22S)-hydroxy-3-oxo-chol-4-ene-24-oyl-CoA. Its pathway is steroid metabolism; cholesterol degradation. Functionally, degradation of the cholesterol side chain involves 3 multistep beta-oxidation cycles, this is involved in the second cycle. Hydrates bulky steroid enoyl-CoA esters, has highest activity with 3-OCDO-CoA (3-oxochol-4,22-dien-24-oyl-CoA) making (22S)-HOCO-CoA, followed by octenoyl-CoA, with weaker activity on 3-OCDS-CoA (3-oxocholest-4,24-dien-26-oyl-CoA) and none on 3-OPDC-CoA (3-oxo-pregna-4,17-diene-20- carboxyl-CoA). Hydrates the same substrate as EchA19, but the 2 enzymes make different stereoisomers of the product. The chain is Enoyl-CoA hydratase ChsH3 from Mycobacterium tuberculosis (strain ATCC 25618 / H37Rv).